The sequence spans 125 residues: N-alpha-acetyltransferase 38, NatC auxiliary subunit (125 aa).

The tract at residues 1-42 (MAGAGPTMLLREENGCCSRRQSSSSAGDSDGEQEDSPATRAR) is disordered. Residue Ala-2 is modified to N-acetylalanine. Over residues 18–28 (SRRQSSSSAGD) the composition is skewed to low complexity. 3 positions are modified to phosphoserine: Ser-22, Ser-25, and Ser-29. The region spanning 40 to 118 (RARQQLEALL…IVSIEVQRES (79 aa)) is the Sm domain.

This sequence belongs to the snRNP Sm proteins family. Component of the N-terminal acetyltransferase C (NatC) complex, which is composed of NAA35, NAA38 and NAA30.

Its subcellular location is the cytoplasm. It localises to the nucleus. Functionally, auxillary component of the N-terminal acetyltransferase C (NatC) complex which catalyzes acetylation of N-terminal methionine residues. N-terminal acetylation protects proteins from ubiquitination and degradation by the N-end rule pathway. This is N-alpha-acetyltransferase 38, NatC auxiliary subunit (Naa38) from Mus musculus (Mouse).